The following is a 308-amino-acid chain: tRNA dimethylallyltransferase (308 aa).

Position 10–17 (10–17) interacts with ATP; the sequence is GPTASGKT. 12 to 17 is a binding site for substrate; sequence TASGKT. 2 interaction with substrate tRNA regions span residues 35 to 38 and 159 to 163; these read DSSL and QRIFR.

The protein belongs to the IPP transferase family. Monomer. Requires Mg(2+) as cofactor.

It catalyses the reaction adenosine(37) in tRNA + dimethylallyl diphosphate = N(6)-dimethylallyladenosine(37) in tRNA + diphosphate. Functionally, catalyzes the transfer of a dimethylallyl group onto the adenine at position 37 in tRNAs that read codons beginning with uridine, leading to the formation of N6-(dimethylallyl)adenosine (i(6)A). This Francisella philomiragia subsp. philomiragia (strain ATCC 25017 / CCUG 19701 / FSC 153 / O#319-036) protein is tRNA dimethylallyltransferase.